A 64-amino-acid polypeptide reads, in one-letter code: Large ribosomal subunit protein bL35 (64 aa).

Residues 1–14 (MKQKTHKGAAKRIK) show a composition bias toward basic residues. A disordered region spans residues 1–50 (MKQKTHKGAAKRIKISGSGKLRREQANRRHLLEGKPSKRTRRLKGTEDVA). Residues 21 to 36 (LRREQANRRHLLEGKP) show a composition bias toward basic and acidic residues.

This sequence belongs to the bacterial ribosomal protein bL35 family.

This Corynebacterium jeikeium (strain K411) protein is Large ribosomal subunit protein bL35.